Here is a 208-residue protein sequence, read N- to C-terminus: Uracil phosphoribosyltransferase (208 aa).

5-phospho-alpha-D-ribose 1-diphosphate-binding positions include Arg-78, Arg-103, and 130 to 138 (DPMLATGGT). Residues Ile-193 and 198–200 (GDA) contribute to the uracil site. Asp-199 serves as a coordination point for 5-phospho-alpha-D-ribose 1-diphosphate.

It belongs to the UPRTase family. Requires Mg(2+) as cofactor.

It catalyses the reaction UMP + diphosphate = 5-phospho-alpha-D-ribose 1-diphosphate + uracil. It participates in pyrimidine metabolism; UMP biosynthesis via salvage pathway; UMP from uracil: step 1/1. Its activity is regulated as follows. Allosterically activated by GTP. In terms of biological role, catalyzes the conversion of uracil and 5-phospho-alpha-D-ribose 1-diphosphate (PRPP) to UMP and diphosphate. This Solidesulfovibrio magneticus (strain ATCC 700980 / DSM 13731 / RS-1) (Desulfovibrio magneticus) protein is Uracil phosphoribosyltransferase.